Consider the following 115-residue polypeptide: Large ribosomal subunit protein bL21 (115 aa).

Belongs to the bacterial ribosomal protein bL21 family. As to quaternary structure, part of the 50S ribosomal subunit. Contacts protein L20.

Functionally, this protein binds to 23S rRNA in the presence of protein L20. The protein is Large ribosomal subunit protein bL21 of Coxiella burnetii (strain Dugway 5J108-111).